Here is a 558-residue protein sequence, read N- to C-terminus: Phosphatidylserine lipase ABHD16A (558 aa).

The next 2 helical transmembrane spans lie at 60–80 and 93–113; these read ILALASVFWSISYYSSPFAFF and VVPFSHYAGTLLLLLAGVACL. Residues 114–558 lie on the Cytoplasmic side of the membrane; that stretch reads RGIGRWTNPQ…AQNFQMPWHL (445 aa). The region spanning 281–407 is the AB hydrolase-1 domain; that stretch reads LVICCEGNAG…LVTRTVRQHL (127 aa). Residues Ser355, Asp430, and His507 each act as charge relay system in the active site.

Belongs to the AB hydrolase superfamily. ABHD16 family.

Its subcellular location is the membrane. The enzyme catalyses 1-heptadecanoyl-2-(5Z,8Z,11Z,14Z-eicosatetraenoyl)-sn-glycero-3-phosphoserine + H2O = 1-heptadecanoyl-sn-glycero-3-phosphoserine + (5Z,8Z,11Z,14Z)-eicosatetraenoate + H(+). It carries out the reaction 1-hexadecanoyl-2-(9Z-octadecenoyl)-sn-glycero-3-phospho-L-serine + H2O = 1-hexadecanoyl-sn-glycero-3-phospho-L-serine + (9Z)-octadecenoate + H(+). The catalysed reaction is 1-octadecanoyl-2-(9Z,12Z-octadecadienoyl)-sn-glycero-3-phosphoserine + H2O = 1-octadecanoyl-sn-glycero-3-phosphoserine + (9Z,12Z)-octadecadienoate + H(+). It catalyses the reaction 1-heptadecanoyl-2-(5Z,8Z,11Z,14Z-eicosatetraenoyl)-sn-glycero-3-phosphocholine + H2O = 1-heptadecanoyl-sn-glycero-3-phosphocholine + (5Z,8Z,11Z,14Z)-eicosatetraenoate + H(+). The enzyme catalyses 1-hexadecanoyl-2-(9Z-octadecenoyl)-sn-glycero-3-phosphoglycerol + H2O = 1-hexadecanoyl-sn-glycero-3-phosphoglycerol + (9Z)-octadecenoate + H(+). It carries out the reaction 1-hexadecanoyl-2-(9Z-octadecenoyl)-sn-glycero-3-phospho-(1D-myo-inositol) + H2O = 1-hexadecanoyl-sn-glycero-3-phospho-(1D-myo-inositol) + (9Z)-octadecenoate + H(+). The catalysed reaction is 1-heptadecanoyl-2-(5Z,8Z,11Z,14Z-eicosatetraenoyl)-sn-glycero-3-phosphoethanolamine + H2O = 1-heptadecanoyl-sn-glycero-3-phosphoethanolamine + (5Z,8Z,11Z,14Z)-eicosatetraenoate + H(+). It catalyses the reaction 1-hexadecanoyl-2-(9Z-octadecenoyl)-sn-glycero-3-phospho-(1'-sn-glycerol) + H2O = 1-hexadecanoyl-sn-glycero-3-phospho-(1'-sn-glycerol) + (9Z)-octadecenoate + H(+). The enzyme catalyses Hydrolyzes glycerol monoesters of long-chain fatty acids.. It carries out the reaction 1-tetradecanoylglycerol + H2O = tetradecanoate + glycerol + H(+). The catalysed reaction is 2-hexadecanoylglycerol + H2O = glycerol + hexadecanoate + H(+). It catalyses the reaction 1-(9Z-octadecenoyl)-glycerol + H2O = glycerol + (9Z)-octadecenoate + H(+). The enzyme catalyses 2-(9Z-octadecenoyl)-glycerol + H2O = glycerol + (9Z)-octadecenoate + H(+). It carries out the reaction 2-(9Z,12Z-octadecadienoyl)-glycerol + H2O = (9Z,12Z)-octadecadienoate + glycerol + H(+). The catalysed reaction is 1-(5Z,8Z,11Z,14Z-eicosatetraenoyl)-glycerol + H2O = glycerol + (5Z,8Z,11Z,14Z)-eicosatetraenoate + H(+). It catalyses the reaction 2-(5Z,8Z,11Z,14Z-eicosatetraenoyl)-glycerol + H2O = glycerol + (5Z,8Z,11Z,14Z)-eicosatetraenoate + H(+). The enzyme catalyses prostaglandin D2-1-glycerol ester + H2O = prostaglandin D2 + glycerol + H(+). It carries out the reaction 2-glyceryl-15-deoxy-Delta(12,14)-prostaglandin J2 + H2O = 15-deoxy-Delta(12,14)-prostaglandin J2 + glycerol + H(+). The catalysed reaction is 1-(9Z,12Z-octadecadienoyl)-glycerol + H2O = (9Z,12Z)-octadecadienoate + glycerol + H(+). Its function is as follows. Phosphatidylserine (PS) lipase that mediates the hydrolysis of phosphatidylserine to generate lysophosphatidylserine (LPS). LPS constitutes a class of signaling lipids that regulates immunological and neurological processes. Has no activity towards diacylglycerol, triacylglycerol or lysophosphatidylserine lipase. Also has monoacylglycerol lipase activity, with preference for 1-(9Z,12Z-octadecadienoyl)-glycerol (1-LG) and 2-glyceryl-15-deoxy-Delta(12,14)-prostaglandin J2 (15d-PGJ(2)-G). The chain is Phosphatidylserine lipase ABHD16A from Bos taurus (Bovine).